Here is a 385-residue protein sequence, read N- to C-terminus: Trans-enoyl reductase poxH (385 aa).

Position 64–67 (64–67 (QPYS)) interacts with NADP(+). Substrate is bound at residue 156-163 (PDPAAPPI). NADP(+) contacts are provided by residues 199-202 (STSV), 223-226 (SGTD), tyrosine 241, and 289-290 (LG). 309 to 313 (HMAPL) is a binding site for substrate. 372–373 (KR) provides a ligand contact to NADP(+).

Belongs to the zinc-containing alcohol dehydrogenase family. As to quaternary structure, monomer.

It participates in secondary metabolite biosynthesis. Its function is as follows. Trans-enoyl reductase; part of the gene cluster that mediates the biosynthesis of oxaleimides, cytotoxic compounds containing an unusual disubstituted succinimide moiety. The first step of the pathway is provided by the HR-PKS poxF that serves in a new mode of collaborative biosynthesis with the PKS-NRPS poxE, by providing the olefin containing amino acid substrate via the synthesis of an ACP-bound dec-4-enoate. The cytochrome P450 monooxygenase poxM-catalyzed oxidation at the alpha-position creates the enzyme-bound 2-hydroxydec-4-enoyl-ACP thioester, which may be prone to spontaneous hydrolysis to yield 2-hydroxydec-4-enoic acid due to increased electrophilicity of the carbonyl. 2-hydroxydec-4-enoic acid can then be further oxidized by poxM to yield the alpha-ketoacid 2-oxodec-4-enoicacid, which is reductively aminated by the aminotransferase poxL to yield (S,E)-2-aminodec-4-enoic acid. The Hybrid PKS-NRPS synthetase poxE then performs condensation between the octaketide product of its PKS modules and the amino group of (S,E)-2-aminodec-4-enoic acid which is activated and incorporated by the adenylation domain. The resulting aminoacyl product can be cyclized by the Diels-Alderase PoxQ and reductively released by the reductive (R) domain of poxE to yield an aldehyde intermediate. The released aldehyde is then substrate for a Knoevenagel condensation by the hydrolyase poxO followed by an oxidation at the 5-position of the pyrrolidone ring. The presence of the olefin from the amino acid building block allows for migration of the substituted allyl group to occur. This allylic transposition reaction takes place in a conjugate addition, semipinacol-like fashion to yield a succinimide intermediate. Iterative two-electron oxidations of the C7 methyl of the succinimide intermediate to the carboxylic acid can be catalyzed by one of two remaining cytochrome P450 monooxygenasess poxC or poxD to yield oxaleimide A. Subsequent oxidation yields the maleimide scaffold oxaleimide I. Both oxaleimide A and oxaleimide I can undergo oxidative modifications in the decalin ring to yield the series of products oxaleimides B to H. This Penicillium oxalicum protein is Trans-enoyl reductase poxH.